The primary structure comprises 1443 residues: Sterol 3-beta-glucosyltransferase ATG26 (1443 aa).

Positions 1–13 (MATQADDAAASQA) are enriched in low complexity. 2 disordered regions span residues 1-69 (MATQ…MFMN) and 88-187 (NDRF…LTLT). Residues 18-32 (GDLKEHVHDELDKIQ) are compositionally biased toward basic and acidic residues. The span at 49 to 58 (DSEDSDDEDN) shows a compositional bias: acidic residues. Residues 104–117 (QNTRTESIARTSIL) show a composition bias toward polar residues. Over residues 125–134 (DKVHRRRKLS) the composition is skewed to basic residues. The segment covering 164–173 (EVADEADDEH) has biased composition (acidic residues). The GRAM 1 domain occupies 240–284 (LKEIFEFDEYEQVIEEYPCWLLQSVLLQGYMYITSKHICFYAYLP). The PH domain maps to 289–385 (EAVKSGYLSK…WVKSLQRVIF (97 aa)). The disordered stretch occupies residues 463–657 (EQVITGDDHD…HGDRHHGIPH (195 aa)). A compositionally biased stretch (low complexity) spans 506–525 (LAPMSPLSPRSPSQLSPRAS). The span at 585–614 (SFLQSSIENPSISTLSPSSYDEPSASQILQ) shows a compositional bias: polar residues. Basic residues predominate over residues 631–642 (SRKRDRSGKRTP). Residues 765–870 (RFRAHFALPE…DCAVTLHQLM (106 aa)) form the GRAM 2 domain. Residues 883-910 (DQEEQDDEEAAAAMAERDELQEARQDEF) are a coiled coil. Residues Ser-957, Arg-958, Asp-960, Ala-1265, His-1267, His-1280, Ser-1283, Gly-1284, Thr-1285, Asp-1304, and Gln-1305 each coordinate UDP-alpha-D-glucose. The interval 1385–1443 (NAEHGLAEDDDDTEESWTFVGRDEPDPDAVTKKLSDGLAGLGAAGDRPPPLGSQAPTVA) is disordered. Residues 1405–1419 (GRDEPDPDAVTKKLS) are compositionally biased toward basic and acidic residues.

The protein belongs to the glycosyltransferase 28 family.

The protein resides in the cytoplasm. It is found in the preautophagosomal structure membrane. It carries out the reaction a sterol + UDP-alpha-D-glucose = a sterol 3-beta-D-glucoside + UDP + H(+). The enzyme catalyses ergosterol + UDP-alpha-D-glucose = ergosteryl 3-beta-D-glucoside + UDP + H(+). Functionally, sterol glycosyltransferase responsible for the glycosylation of ergosterol to form ergosterol-glucoside. In Gibberella zeae (strain ATCC MYA-4620 / CBS 123657 / FGSC 9075 / NRRL 31084 / PH-1) (Wheat head blight fungus), this protein is Sterol 3-beta-glucosyltransferase ATG26.